Consider the following 190-residue polypeptide: MTDTTVEAPATPRLKVKYNEQIIPELEKEFKYSNPMQVARVQKVVVSMGVGAAARDSKLIEGAVKDLTLITGQKPKITKAKKSVAQFHLREGQAIGAYVTLRGDRMWEFLDRLLTLALPRIRDFRGINGHQFDGQGNYNFGLTEQSMFHEIDPDSIDHVRGMDITVVTSTKDDKEAYALLKHLGFPFKEN.

It belongs to the universal ribosomal protein uL5 family. Part of the 50S ribosomal subunit; part of the 5S rRNA/L5/L18/L25 subcomplex. Contacts the 5S rRNA and the P site tRNA. Forms a bridge to the 30S subunit in the 70S ribosome.

Functionally, this is one of the proteins that bind and probably mediate the attachment of the 5S RNA into the large ribosomal subunit, where it forms part of the central protuberance. In the 70S ribosome it contacts protein S13 of the 30S subunit (bridge B1b), connecting the 2 subunits; this bridge is implicated in subunit movement. Contacts the P site tRNA; the 5S rRNA and some of its associated proteins might help stabilize positioning of ribosome-bound tRNAs. The chain is Large ribosomal subunit protein uL5 from Bifidobacterium longum (strain DJO10A).